Consider the following 382-residue polypeptide: MNRTFDRKAYRQELIDAGFSAEDAETIASRTVMRAPRETFQSVGSMVQQATAKIERDSVQLAPPALPAPSAAVERSRRLEQEAAGLAKSMTIDTRGTMTTKKRKTAGEDLAKQVSEAKQAALLKHTKQQIKEMQLSLFDIAPWPDTMRAMPNDTARSALFTTRNKKIPREALQNKVIFHVNKDVKITYTGVELRADDDELVWQQVLEYAKRTPIGEPITFTFYELCQDLGWSINGRYYTKAEECLSRLQATAMGFTSDRVGHLESVSLLHRFRVLDRGKKTSRCQVLIDEEIVVLFAGDHYTKFIWEKYRKLSPTARRMFDYFSSHREPYPLKLETFRLMCGSDSTRVKKWREQVGEACEELRGSGLVEHAWVNDDLVHCKR.

The interval 1–163 (MNRTFDRKAY…TARSALFTTR (163 aa)) is toxic in E.coli strain K12 / DH5-alpha; may be membrane-associated. The segment at residues 246 to 265 (SRLQATAMGFTSDRVGHLES) is a DNA-binding region (H-T-H motif). The interval 286 to 297 (VLIDEEIVVLFA) is hydrophobic region (HR); required for membrane association.

Forms a dimer in solution, binds DNA as a monomer. Both mononer and dimer of the short form interact with Hda (Dp).

The protein resides in the cell inner membrane. Its function is as follows. Required for initiation of plasmid DNA replication, along with host-derived DnaA and other host proteins. Both forms of the protein are capable of initiating plasmid replication in a number of Gram-negative bacteria. Binds to 8 17-base pair repeat sequences (iterons) in the RK2 minimal replication origin (oriV), opening the origin of replication. oriV opening does not absolutely require the presence of nucleotides; formation of open complex is somewhat enhanced by ATP or ATP gamma S, while DnaA or HU is required for full opening. In terms of biological role, also involved in plasmid copy number control, promoting intermolecular coupling of protein bound iterons at oriV, which inhibits replication initiation. This chain is Plasmid replication initiator protein TrfA (trfA), found in Escherichia coli.